Here is a 274-residue protein sequence, read N- to C-terminus: MGDTASVSEHHESPTVTIVPLHRSHALVAEQQLFQWLKRFKLLMEVYHGLVWQLACTLTVCLLAWLAFPDVQGQCANGIVPALSSIVPVSTLAMLRGFAEFRPHTTNFAHLTVACLLINTGITVCTGFCGERRVIGLSFALVMVFFVLCSGLTYLAGNNPTRWKVIGIGYGWSVIVFYLLLYFSPVLWVSKIYSGLYVLVVTAASAVLIYETLDLIYQRGTLSKNSVCVSVVLYTIVMSLLNMSVAIFSGHVWVQQYAEKHGGRIDGVSLLSLL.

7 helical membrane passes run 49–69 (GLVW…LAFP), 75–95 (CANG…LAML), 108–128 (FAHL…CTGF), 134–154 (VIGL…GLTY), 168–188 (IGYG…PVLW), 196–216 (LYVL…LDLI), and 228–248 (CVSV…VAIF).

Belongs to the cytomegalovirus US12 family.

The protein resides in the host membrane. This is Transmembrane protein US18 (US18) from Human cytomegalovirus (strain Merlin) (HHV-5).